We begin with the raw amino-acid sequence, 145 residues long: D-aminoacyl-tRNA deacylase (145 aa).

A Gly-cisPro motif, important for rejection of L-amino acids motif is present at residues 137 to 138; the sequence is GP.

Belongs to the DTD family. Homodimer.

It is found in the cytoplasm. The catalysed reaction is glycyl-tRNA(Ala) + H2O = tRNA(Ala) + glycine + H(+). The enzyme catalyses a D-aminoacyl-tRNA + H2O = a tRNA + a D-alpha-amino acid + H(+). Its function is as follows. An aminoacyl-tRNA editing enzyme that deacylates mischarged D-aminoacyl-tRNAs. Also deacylates mischarged glycyl-tRNA(Ala), protecting cells against glycine mischarging by AlaRS. Acts via tRNA-based rather than protein-based catalysis; rejects L-amino acids rather than detecting D-amino acids in the active site. By recycling D-aminoacyl-tRNA to D-amino acids and free tRNA molecules, this enzyme counteracts the toxicity associated with the formation of D-aminoacyl-tRNA entities in vivo and helps enforce protein L-homochirality. The chain is D-aminoacyl-tRNA deacylase from Rhodococcus opacus (strain B4).